A 503-amino-acid chain; its full sequence is WD repeat-containing protein 55 homolog (503 aa).

2 disordered regions span residues 1-21 (MHTH…DLDD) and 35-132 (ALVG…DDLD). Composition is skewed to acidic residues over residues 12-21 (DADELDDLDD), 40-50 (DVSDSDIDEHD), and 78-96 (NAED…DEAE). 6 WD repeats span residues 157-196 (KLED…NKLL), 201-242 (VHSK…KLYE), 244-282 (AHDD…PIFE), 285-324 (EVED…LYVQ), 327-366 (PYEE…YHCD), and 411-450 (QHNM…DFGD). The tract at residues 483–503 (TKEDEDNADNNDAAAGPSNSA) is disordered.

The protein belongs to the WD repeat WDR55 family.

The polypeptide is WD repeat-containing protein 55 homolog (Drosophila persimilis (Fruit fly)).